Consider the following 421-residue polypeptide: UDP-N-acetylglucosamine 1-carboxyvinyltransferase (421 aa).

22 to 23 (KN) contributes to the phosphoenolpyruvate binding site. Residue arginine 92 participates in UDP-N-acetyl-alpha-D-glucosamine binding. The active-site Proton donor is the cysteine 116. A 2-(S-cysteinyl)pyruvic acid O-phosphothioketal modification is found at cysteine 116. UDP-N-acetyl-alpha-D-glucosamine contacts are provided by residues 121–125 (RPVDQ), aspartate 304, and isoleucine 326.

It belongs to the EPSP synthase family. MurA subfamily.

The protein localises to the cytoplasm. The enzyme catalyses phosphoenolpyruvate + UDP-N-acetyl-alpha-D-glucosamine = UDP-N-acetyl-3-O-(1-carboxyvinyl)-alpha-D-glucosamine + phosphate. The protein operates within cell wall biogenesis; peptidoglycan biosynthesis. Functionally, cell wall formation. Adds enolpyruvyl to UDP-N-acetylglucosamine. The sequence is that of UDP-N-acetylglucosamine 1-carboxyvinyltransferase from Bordetella avium (strain 197N).